A 144-amino-acid polypeptide reads, in one-letter code: Histone H3.1 (144 aa).

Residues 1–45 (MARTKQSARKTTGGKAPRKQLSAKSARKGVSPASSAGAKKSRYRP) form a disordered region. K5 carries the N6,N6,N6-trimethyllysine; alternate modification. K5 carries the N6,N6-dimethyllysine; alternate modification. Residues K5 and K10 each carry the N6-methyllysine; alternate modification. N6-acetyllysine; alternate occurs at positions 10, 15, 19, 24, 28, and 39. Residue K15 is modified to N6,N6-dimethyllysine; alternate. 4 positions are modified to N6-methyllysine; alternate: K19, K24, K28, and K39. N6,N6,N6-trimethyllysine; alternate occurs at positions 28 and 39. N6,N6-dimethyllysine; alternate is present on residues K28 and K39. N6-acetyllysine is present on K58.

The protein belongs to the histone H3 family. In terms of assembly, the nucleosome is a histone octamer containing two molecules each of H2A, H2B, H3 and H4 assembled in one H3-H4 heterotetramer and two H2A-H2B heterodimers. The octamer wraps approximately 147 bp of DNA. In terms of processing, mono-, di- and trimethylated to form H3K4me1/2/3. H3K4me activates gene expression by regulating transcription elongation and plays a role in telomere length maintenance. H3K4me enrichment correlates with transcription levels, and occurs in a 5' to 3' gradient with H3K4me3 enrichment at the 5'-end of genes, shifting to H3K4me2 and then H3K4me1. H3K36me represses gene expression. Post-translationally, acetylation of histone H3 leads to transcriptional activation.

It is found in the nucleus. The protein resides in the chromosome. In terms of biological role, core component of nucleosome. Nucleosomes wrap and compact DNA into chromatin, limiting DNA accessibility to the cellular machineries which require DNA as a template. Histones thereby play a central role in transcription regulation, DNA repair, DNA replication and chromosomal stability. DNA accessibility is regulated via a complex set of post-translational modifications of histones, also called histone code, and nucleosome remodeling. This chain is Histone H3.1 (HHT1), found in Encephalitozoon cuniculi (strain GB-M1) (Microsporidian parasite).